Consider the following 298-residue polypeptide: tRNA dimethylallyltransferase 2 (298 aa).

10-17 (GPTASGKT) contacts ATP. 12–17 (TASGKT) contacts substrate. The segment at 35-38 (DSRQ) is interaction with substrate tRNA.

The protein belongs to the IPP transferase family. Monomer. Mg(2+) is required as a cofactor.

The catalysed reaction is adenosine(37) in tRNA + dimethylallyl diphosphate = N(6)-dimethylallyladenosine(37) in tRNA + diphosphate. In terms of biological role, catalyzes the transfer of a dimethylallyl group onto the adenine at position 37 in tRNAs that read codons beginning with uridine, leading to the formation of N6-(dimethylallyl)adenosine (i(6)A). The protein is tRNA dimethylallyltransferase 2 of Syntrophotalea carbinolica (strain DSM 2380 / NBRC 103641 / GraBd1) (Pelobacter carbinolicus).